A 690-amino-acid polypeptide reads, in one-letter code: Polyribonucleotide nucleotidyltransferase (690 aa).

Positions 483 and 489 each coordinate Mg(2+). In terms of domain architecture, KH spans 550–609 (PKMEQITVDKKDIAAVIGKGGATIREIVEKSGAKLDVNDEGVVTVAAPDEESRNIAMQMI). The S1 motif domain maps to 619–686 (NKIYSGKVMK…DRGKVKLSMK (68 aa)).

Belongs to the polyribonucleotide nucleotidyltransferase family. Mg(2+) is required as a cofactor.

The protein localises to the cytoplasm. It catalyses the reaction RNA(n+1) + phosphate = RNA(n) + a ribonucleoside 5'-diphosphate. In terms of biological role, involved in mRNA degradation. Catalyzes the phosphorolysis of single-stranded polyribonucleotides processively in the 3'- to 5'-direction. The chain is Polyribonucleotide nucleotidyltransferase from Pelagibacter ubique (strain HTCC1062).